The chain runs to 458 residues: uncharacterized protein (458 aa).

Residues 8 to 66 enclose the TRAM domain; sequence PVEKNEFIDVVFEDLTHDGAGVAKVKGYPIFVKNGLPGEEAQIKIIKVKKNFAFGRLMK. Positions 79, 85, 88, and 166 each coordinate [4Fe-4S] cluster. S-adenosyl-L-methionine is bound by residues glutamine 290, tyrosine 319, glutamate 340, and aspartate 388. Cysteine 415 (nucleophile) is an active-site residue.

Belongs to the class I-like SAM-binding methyltransferase superfamily. RNA M5U methyltransferase family.

This is an uncharacterized protein from Bacillus cereus (strain ATCC 14579 / DSM 31 / CCUG 7414 / JCM 2152 / NBRC 15305 / NCIMB 9373 / NCTC 2599 / NRRL B-3711).